Consider the following 120-residue polypeptide: Large ribosomal subunit protein uL18 (120 aa).

This sequence belongs to the universal ribosomal protein uL18 family. As to quaternary structure, part of the 50S ribosomal subunit; part of the 5S rRNA/L5/L18/L25 subcomplex. Contacts the 5S and 23S rRNAs.

Functionally, this is one of the proteins that bind and probably mediate the attachment of the 5S RNA into the large ribosomal subunit, where it forms part of the central protuberance. The sequence is that of Large ribosomal subunit protein uL18 from Rhizobium etli (strain CIAT 652).